The primary structure comprises 113 residues: Parvalbumin beta (113 aa).

An N-acetylalanine modification is found at Ala-1. Cys-18 carries S-linked (Glc) cysteine glycosylation. EF-hand domains are found at residues 38 to 73 (FSAD…FAAD) and 77 to 112 (LTDA…WGAK). Ca(2+) is bound by residues Asp-51, Asp-53, Glu-55, Phe-57, Glu-59, Glu-62, Asp-90, Asp-92, Asp-94, Lys-96, and Glu-101.

The protein belongs to the parvalbumin family. In terms of tissue distribution, muscle (at protein level).

In terms of biological role, in muscle, parvalbumin is thought to be involved in relaxation after contraction. It binds two calcium ions. The sequence is that of Parvalbumin beta from Gadus morhua subsp. callarias (Baltic cod).